The following is an 839-amino-acid chain: Pre-mRNA-splicing factor syf1 (839 aa).

13 HAT repeats span residues 12–44 (YLIA…YKQQ), 46–78 (GTLY…FRIN), 90–122 (AEYQ…FLLQ), 124–158 (PLVT…FARS), 274–309 (GNFE…FEES), 377–415 (DNKE…FYES), 417–453 (GDLD…MELR), 470–502 (APKK…YVDL), 507–539 (ATLE…LLEE), 541–575 (KYFE…KAVD), 578–612 (IGIE…LEEE), 650–684 (FGLT…MERR), and 686–720 (GEID…FEVQ). The interval 758 to 839 (QRAQEGARER…IDLDDDMDAE (82 aa)) is disordered. Positions 762–782 (EGAREREGEEAGTDASKERAD) are enriched in basic and acidic residues. Positions 830–839 (IDLDDDMDAE) are enriched in acidic residues.

It belongs to the crooked-neck family. As to quaternary structure, associated with the spliceosome.

The protein resides in the nucleus. Its function is as follows. Involved in pre-mRNA splicing and cell cycle progression. In Aspergillus fumigatus (strain ATCC MYA-4609 / CBS 101355 / FGSC A1100 / Af293) (Neosartorya fumigata), this protein is Pre-mRNA-splicing factor syf1 (syf1).